A 458-amino-acid polypeptide reads, in one-letter code: SH2 domain-containing protein 7 (458 aa).

Residues 51 to 142 (WFHGFITRKQ…PFGETLAAAC (92 aa)) form the SH2 domain. 2 disordered regions span residues 204-235 (RSVS…SPAG) and 267-326 (AGSL…TLGS). The span at 278–288 (PSGKLSDEDQN) shows a compositional bias: basic and acidic residues. The segment covering 304 to 326 (QGSTMPYTSLGFSLPPSSETLGS) has biased composition (polar residues).

The polypeptide is SH2 domain-containing protein 7 (Sh2d7) (Mus musculus (Mouse)).